The sequence spans 286 residues: Mating type protein A-1 (286 aa).

Positions 40–95 (AAKKKVNGFMSFRSYYSPLFSQLPQKERSPFMTILWQHDPFHNEWNFMCSVYSSIR) form a DNA-binding region, alpha box.

The protein belongs to the MATALPHA1 family.

It localises to the nucleus. In terms of biological role, required for expression of the heterokaryon incompatibility and sexual functions. This chain is Mating type protein A-1 (MTA-1), found in Neurospora africana.